We begin with the raw amino-acid sequence, 431 residues long: 3-phosphoshikimate 1-carboxyvinyltransferase (431 aa).

Positions 22, 23, and 27 each coordinate 3-phosphoshikimate. Position 22 (K22) interacts with phosphoenolpyruvate. Phosphoenolpyruvate is bound by residues G94 and R122. The 3-phosphoshikimate site is built by S167, Q169, D315, and K342. Q169 is a phosphoenolpyruvate binding site. The active-site Proton acceptor is D315. R346 and R388 together coordinate phosphoenolpyruvate.

This sequence belongs to the EPSP synthase family. In terms of assembly, monomer.

The protein localises to the cytoplasm. It carries out the reaction 3-phosphoshikimate + phosphoenolpyruvate = 5-O-(1-carboxyvinyl)-3-phosphoshikimate + phosphate. The protein operates within metabolic intermediate biosynthesis; chorismate biosynthesis; chorismate from D-erythrose 4-phosphate and phosphoenolpyruvate: step 6/7. Its function is as follows. Catalyzes the transfer of the enolpyruvyl moiety of phosphoenolpyruvate (PEP) to the 5-hydroxyl of shikimate-3-phosphate (S3P) to produce enolpyruvyl shikimate-3-phosphate and inorganic phosphate. The chain is 3-phosphoshikimate 1-carboxyvinyltransferase from Pelobacter propionicus (strain DSM 2379 / NBRC 103807 / OttBd1).